Here is a 733-residue protein sequence, read N- to C-terminus: Vinexin (733 aa).

Disordered regions lie at residues 1-51 (MARI…SNLD), 129-165 (TWPGPGSRPSMSPKPPASQHAQNWSATWTKDSKRQDK), 224-285 (SARA…NQVP), and 352-448 (ETRL…KRKA). Residues 32 to 42 (DPNRVHTKEQL) show a composition bias toward basic and acidic residues. The segment covering 147–157 (QHAQNWSATWT) has biased composition (polar residues). The 69-residue stretch at 164-232 (DKRWVKYEGI…VSARASSAEP (69 aa)) folds into the SoHo domain. Polar residues-rich tracts occupy residues 245–256 (PGTTETSSGRNW) and 264–277 (RNTFNYNFRPSSSG). Phosphoserine is present on residues Ser-412 and Ser-459. SH3 domains are found at residues 444 to 503 (KKRK…VLPA) and 518 to 579 (LEYG…INRE). Positions 444 to 579 (KKRKAARLKF…PASYVQINRE (136 aa)) are binds to vinculin. Residues 584–672 (LCDDGPQLPA…INLGPSSPNT (89 aa)) form a disordered region. Ser-594 carries the post-translational modification Phosphoserine; by MAPK1. Residues 597-613 (PTTTAHLSSHSHPSSIP) are compositionally biased toward low complexity. Residues Ser-607, Ser-610, and Ser-624 each carry the phosphoserine modification. Positions 638–651 (EPRSQTQSLNTPGP) are enriched in polar residues. The SH3 3 domain occupies 674–733 (IHWTPYRAMYQYRPQNEDELELREGDRVDVMQQCDDGWFVGVSRRTQKFGTFPGNYVAPV). Residues 674–733 (IHWTPYRAMYQYRPQNEDELELREGDRVDVMQQCDDGWFVGVSRRTQKFGTFPGNYVAPV) are binds to SOS.

As to quaternary structure, interacts with vinculin by the first two SH3 domains and the proline rich region of vinculin. Binds to SOS (guanine nucleotide exchange factor of RAS and RAC), through its third SH3 domain. The formation of this complex is down-regulated by phosphorylation of SOS. Interacts with SAFB2, INPPL1/SHIP2 and SRCIN1. Interacts with DLG5 through its third SH3 domain. Interacts with SOCS7 and MAPK1/ERK2. Interacts with FASLG. Phosphorylated at Ser-594 by MAPK1/ERK2 during cell spreading.

The protein resides in the cell junction. The protein localises to the focal adhesion. It is found in the cytoplasm. Its subcellular location is the cytoskeleton. Promotes up-regulation of actin stress fiber formation. This chain is Vinexin (Sorbs3), found in Mus musculus (Mouse).